The following is a 1888-amino-acid chain: MTGCPASSRRRGFGLFFFLRLHRLLLLFLVLRGTLANKLNVPQVLLPFGREPGRVPFLLEAQRGCYTWHSTHHDAVTVEPLYENGTLCSQKAVLIAESTQPIRLSSIILAREIVTDHELRCDVKVDVINSIEIVSRARELYVDDSPLELMVRALDAEGNTFSSLAGMMFEWSIAQDNESAREELSSKIRILKYSEAEYAPPIYIAEMEKEEKQGDVILVSGIRTGAAVVKVRIHEPFYKKVAAALIRLLVLENIFLIPSHDIYLLVGTYIKYQVAKMVQGRVTEVKFPLEHYILELQDHRVALNGSHSEKVAILDDKTAMVTASQLGQTNLVFVHKNVHMRSVSGLPNCTIYVVEPGFLGFTVQPGNRWSLEVGQVYVITVDVFDKSSTKVYISDNLRITYDFPKEYFEEQLTTVNGSYHIVKALKDGVVVINASLTSIIYQNKDIQPIKFLIKHQQEVKIYFPIMLTPKFLAFPHHPMGMLYRYKVQVEGGSGNFTWTSSNETVVIVTTKGVVTAGQVRGNSTVLARDVQNPFRYGEIKIHVLKLNKMELLPFHADVEIGQIIEIPIAMYHINKETKEAMAFTDCSHLSLDLNMDKQGVFTLLKEGIQRPGPMHCSSTHIAAKSLGHTLVTVSVNECDKYLESSATFAAYEPLKALNPVEVALVTWQSVKEMVFEGGPRPWILEPSRFFLELNAEKTEKIGIAQVWLPSKRKQNQYIYRIQCLDLGEQVLTFRIGNHPGVLNPSPAVEVLQVRFICAHPASMSVTPVYKVPAGAQPCPLPQHNKWLIPVSRLRDTVLELAVFDQHRRKFDNFSSLMLEWKSSNETLAHFEDYKSVEMVAKDDGSGQTRLHGHQILKVHQIKGTVLIGVNFVGYSEKKSPKEISNLPRSVDVELLLVDDVTVVPENATIYNHPDVKETFSLVEGSGYFLVNSSEQGVVTITYMEAESSVELVPLHPGFFTLEVYDLCLAFLGPATAHLRVSDIQELELDLIDKVEIDKTVLVTVRVLGSSKRPFQNKYFRNMELKLQLASAIVTLTPMEQQDEYSENYILRATTIGQTTLVAIAKDKMGRKYTSTPRHIEVFPPFRLLPEKMTLIPMNMMQVMSEGGPQPQSIVHFSISNQTVAVVNRRGQVTGKIVGTAVVHGTIQTVNEDTGKVIVFSQDEVQIEVVQLRAVRILAAATRLITATKMPVYVMGVTSTQTPFSFSNANPGLTFHWSMSKRDVLDLVPRHSEVFLQLPVEHNFAMVVHTKAAGRTSIKVTVHCMNSSSGQFEGNLLELSDEVQILVFEKLQLFYPECQPEQILMPINSQLKLHTNREGAAFVSSRVLKCFPNSSVIEEDGEGLLKAGSIAGTAVLEVTSIEPFGVNQTTITGVQVAPVTYLRVSSQPKLYTAQGRTLSAFPLGMSLTFTVQFYNSIGEKFHTHNTQLYLALNRDDLLHIGPGNKNYTYMAQAVNRGLTLVGLWDRRHPGMADYIPVAVEHAIEPDTKLTFVGDIICFSTHLVSQHGEPGIWMISANNILQTDIVTGVGVARSPGTAMIFHDIPGVVKTYREVVVNASSRLMLSYDLKTYLTNTLNSTVFKLFITTGRNGVNLKGFCTPNQALAITKVLLPATLMLCHVQFSNTLLDIPASKVFQVHSDFSMEKGVYVCIIKVRPQSEELLQALSVADTSVYGWATLVSERSKNGMQRILIPFIPAFYINQSELVLSHKQDIGEIRVLGVDRVLRKLEVISSSPVLVVAGHSHSPLTPGLAIYSVRVVNFTSFQQMASPVFINISCVLTSQSEAVVVRAMKDKLGADHCEDSAILKRFTGSYQILLLTLFAVLASTASIFLAYNAFLNKIQTVPVVYVPTLGTPQPGFFNSTSSPPHFMSLQPPLAQSRLQHWLWSIRH.

Residues 1-35 (MTGCPASSRRRGFGLFFFLRLHRLLLLFLVLRGTL) form the signal peptide. Asn-84, Asn-304, Asn-348, Asn-495, Asn-522, Asn-812, and Asn-931 each carry an N-linked (GlcNAc...) asparagine glycan. Residues 1082–1154 (FPPFRLLPEK…TIQTVNEDTG (73 aa)) enclose the BIG2 domain. A glycan (N-linked (GlcNAc...) asparagine) is linked at Asn-1445. A helical membrane pass occupies residues 1813-1833 (ILLLTLFAVLASTASIFLAYN). Asn-1859 carries an N-linked (GlcNAc...) asparagine glycan.

The protein belongs to the NUP210 family.

The protein resides in the nucleus membrane. This Homo sapiens (Human) protein is Nuclear pore membrane glycoprotein 210-like (NUP210L).